The chain runs to 179 residues: Large ribosomal subunit protein uL5 (179 aa).

This sequence belongs to the universal ribosomal protein uL5 family. As to quaternary structure, part of the 50S ribosomal subunit; part of the 5S rRNA/L5/L18/L25 subcomplex. Contacts the 5S rRNA and the P site tRNA. Forms a bridge to the 30S subunit in the 70S ribosome.

In terms of biological role, this is one of the proteins that bind and probably mediate the attachment of the 5S RNA into the large ribosomal subunit, where it forms part of the central protuberance. In the 70S ribosome it contacts protein S13 of the 30S subunit (bridge B1b), connecting the 2 subunits; this bridge is implicated in subunit movement. Contacts the P site tRNA; the 5S rRNA and some of its associated proteins might help stabilize positioning of ribosome-bound tRNAs. This is Large ribosomal subunit protein uL5 from Francisella tularensis subsp. novicida (strain U112).